The following is a 1245-amino-acid chain: ABC transporter B family member 13 (1245 aa).

Residues 1 to 14 show a composition bias toward polar residues; it reads MDNTERSSNGNIQA. Positions 1–20 are disordered; sequence MDNTERSSNGNIQAETEAKE. The region spanning 47–336 is the ABC transmembrane type-1 1 domain; sequence MLLGGLGACI…AAPSLSAIAK (290 aa). The chain crosses the membrane as a helical span at residues 48–68; sequence LLGGLGACIHGATLPLFFVFF. A glycan (N-linked (GlcNAc...) asparagine) is linked at asparagine 77. Transmembrane regions (helical) follow at residues 94 to 114, 171 to 191, 195 to 215, 276 to 296, and 314 to 334; these read LYLV…VSCW, HVLR…LSVW, LLTL…AIVM, LGVG…LWYA, and ILNV…LSAI. N-linked (GlcNAc...) asparagine glycosylation is found at asparagine 351 and asparagine 391. The region spanning 372–607 is the ABC transporter 1 domain; the sequence is IEFQKVSFAY…GGDYATLVNC (236 aa). An ATP-binding site is contributed by 406 to 413; it reads GPSGSGKS. A compositionally biased stretch (polar residues) spans 610–629; the sequence is TEPQENSRSIMSETCKSQAG. The segment at 610–660 is disordered; sequence TEPQENSRSIMSETCKSQAGSSSSRRVSSSRRTSSFRVDQEKTKNDDSKKD. A compositionally biased stretch (low complexity) spans 630–646; that stretch reads SSSSRRVSSSRRTSSFR. Residues 647-660 are compositionally biased toward basic and acidic residues; the sequence is VDQEKTKNDDSKKD. In terms of domain architecture, ABC transmembrane type-1 2 spans 681 to 969; sequence ALLGSIGAVL…TLALTPDIVK (289 aa). Transmembrane regions (helical) follow at residues 686–706 and 725–745; these read IGAV…AYVL and AIIF…QHYF. A glycan (N-linked (GlcNAc...) asparagine) is linked at asparagine 778. The next 4 helical transmembrane spans lie at 805-822, 828-848, 913-933, and 947-967; these read IVQN…AFFY, AVVT…QLFL, LSQF…SVLI, and FMVL…TPDI. In terms of domain architecture, ABC transporter 2 spans 1004–1240; the sequence is IEFRNVSFVY…PNGFYKQLTS (237 aa). An N-linked (GlcNAc...) asparagine glycan is attached at asparagine 1008. Position 1039–1046 (1039–1046) interacts with ATP; it reads GPSGSGKS. Residue asparagine 1106 is glycosylated (N-linked (GlcNAc...) asparagine).

It belongs to the ABC transporter superfamily. ABCB family. Multidrug resistance exporter (TC 3.A.1.201) subfamily.

Its subcellular location is the membrane. The chain is ABC transporter B family member 13 (ABCB13) from Arabidopsis thaliana (Mouse-ear cress).